The sequence spans 437 residues: MKLPRIGFISLGCPKALVDSERIITQLRAEGYAIVPTYQDADLVVVNTCGFIDAAVEESLEAIGEAVAENGKVIVTGCLGERPEEIQARHPAVLKVTGAHAYEEVMNAVHEHLPPLHDPFMDLVPPQGVRLTPRHYAYLKISEGCNHRCSFCIIPALRGDLVSRPIGEVMTEAERLVAAGVKEILVVSQDTSAYGADLGYRTGFWGGRPLRTRFQELARALGDLGVWIRLHYVYPYPHVDEVIPLMAEGRLLPYLDIPFQHASARVLKAMKRPAATENILAAIRRWREVCPELTLRSTFIVGFPGETEDEFRELLDFLEEARLDRVGCFEYSPVKGAAANALPDPVPAEVKAERHARLMEVQERISAARLRTRIGRTETVLVDEVVEEGAVARRRADAPEIDGQVFIDGATHLEVGEFVEATFEDADAHDLWARLAD.

Residues 4 to 114 (PRIGFISLGC…VMNAVHEHLP (111 aa)) enclose the MTTase N-terminal domain. Residues C13, C49, C78, C145, C149, and C152 each coordinate [4Fe-4S] cluster. A Radical SAM core domain is found at 131-368 (LTPRHYAYLK…MEVQERISAA (238 aa)). A TRAM domain is found at 371–437 (RTRIGRTETV…AHDLWARLAD (67 aa)).

Belongs to the methylthiotransferase family. RimO subfamily. The cofactor is [4Fe-4S] cluster.

It is found in the cytoplasm. It catalyses the reaction L-aspartate(89)-[ribosomal protein uS12]-hydrogen + (sulfur carrier)-SH + AH2 + 2 S-adenosyl-L-methionine = 3-methylsulfanyl-L-aspartate(89)-[ribosomal protein uS12]-hydrogen + (sulfur carrier)-H + 5'-deoxyadenosine + L-methionine + A + S-adenosyl-L-homocysteine + 2 H(+). Catalyzes the methylthiolation of an aspartic acid residue of ribosomal protein uS12. This is Ribosomal protein uS12 methylthiotransferase RimO from Methylococcus capsulatus (strain ATCC 33009 / NCIMB 11132 / Bath).